The following is a 239-amino-acid chain: 1-(5-phosphoribosyl)-5-[(5-phosphoribosylamino)methylideneamino] imidazole-4-carboxamide isomerase (239 aa).

Catalysis depends on Asp8, which acts as the Proton acceptor. Asp129 functions as the Proton donor in the catalytic mechanism.

This sequence belongs to the HisA/HisF family.

Its subcellular location is the cytoplasm. It carries out the reaction 1-(5-phospho-beta-D-ribosyl)-5-[(5-phospho-beta-D-ribosylamino)methylideneamino]imidazole-4-carboxamide = 5-[(5-phospho-1-deoxy-D-ribulos-1-ylimino)methylamino]-1-(5-phospho-beta-D-ribosyl)imidazole-4-carboxamide. Its pathway is amino-acid biosynthesis; L-histidine biosynthesis; L-histidine from 5-phospho-alpha-D-ribose 1-diphosphate: step 4/9. This is 1-(5-phosphoribosyl)-5-[(5-phosphoribosylamino)methylideneamino] imidazole-4-carboxamide isomerase from Roseobacter denitrificans (strain ATCC 33942 / OCh 114) (Erythrobacter sp. (strain OCh 114)).